A 202-amino-acid polypeptide reads, in one-letter code: dTTP/UTP pyrophosphatase (202 aa).

The active-site Proton acceptor is aspartate 80.

It belongs to the Maf family. YhdE subfamily. It depends on a divalent metal cation as a cofactor.

It is found in the cytoplasm. The enzyme catalyses dTTP + H2O = dTMP + diphosphate + H(+). It carries out the reaction UTP + H2O = UMP + diphosphate + H(+). Functionally, nucleoside triphosphate pyrophosphatase that hydrolyzes dTTP and UTP. May have a dual role in cell division arrest and in preventing the incorporation of modified nucleotides into cellular nucleic acids. In Alkalilimnicola ehrlichii (strain ATCC BAA-1101 / DSM 17681 / MLHE-1), this protein is dTTP/UTP pyrophosphatase.